Consider the following 309-residue polypeptide: Golgi to ER traffic protein 4 homolog (309 aa).

The disordered stretch occupies residues 290-309; that stretch reads SGGGLASMEVDGPTIEDEMD.

Belongs to the GET4 family.

Functionally, may play a role in insertion of tail-anchored proteins into the endoplasmic reticulum membrane. This Dictyostelium discoideum (Social amoeba) protein is Golgi to ER traffic protein 4 homolog.